The primary structure comprises 920 residues: Protein FAN (920 aa).

The GRAM domain occupies Arg-176–Arg-247. The 98-residue stretch at Ser-189–Ala-286 folds into the BEACH-type PH domain. Residues Glu-290–Arg-575 enclose the BEACH domain. WD repeat units follow at residues Ile-631–Ser-661, Phe-673–Ser-703, Gly-715–Ser-743, Glu-764–Asp-794, Cys-806–Asp-836, and Gly-887–Lys-917.

Functionally, couples the p55 TNF-receptor (TNF-R55 / TNFR1) to neutral sphingomyelinase (N-SMASE). Specifically binds to the N-smase activation domain of TNF-R55. May regulate ceramide production by N-SMASE. The sequence is that of Protein FAN (Nsmaf) from Mus musculus (Mouse).